A 5762-amino-acid polypeptide reads, in one-letter code: Mucin-5B (5762 aa).

An N-terminal signal peptide occupies residues 1–25 (MGAPSACRTLVLALAAMLVVPQAET). The interval 27–50 (GPVEPSWENAGHTMDGGAPTSSPT) is disordered. Residues 75 to 245 (RVCSTWGDFH…KLDGPTEQCP (171 aa)) enclose the VWFD 1 domain. 2 disulfide bridges follow: Cys77-Cys207 and Cys99-Cys244. Asn145 is a glycosylation site (N-linked (GlcNAc...) asparagine). A Cu(2+)-binding site is contributed by Glu194. Residues Asn201 and Asn254 are each glycosylated (N-linked (GlcNAc...) asparagine). Residues His311 and His358 each coordinate Cu(2+). In terms of domain architecture, TIL 1 spans 329-385 (CPLNMQHQECGSPCTDTCSNPQRAQLCEDHCVDGCFCPPGTVLDDITHSGCLPLGQC). A glycan (N-linked (GlcNAc...) asparagine) is linked at Asn401. The region spanning 423–598 (GTCSVQGGAH…NTWKAQAACA (176 aa)) is the VWFD 2 domain. 3 cysteine pairs are disulfide-bonded: Cys425–Cys562, Cys447–Cys597, and Cys469–Cys477. A glycan (N-linked (GlcNAc...) asparagine) is linked at Asn515. TIL domains lie at 695 to 752 (CPKS…AQEC) and 805 to 855 (NSSA…EEDC). Asn805 is a glycosylation site (N-linked (GlcNAc...) asparagine). Residues 855-927 (CPCVHNEATY…EYILAQDYCG (73 aa)) form the VWFC 1 domain. Residues 893 to 1062 (GTCVAYGDGH…NSWKLSPSCP (170 aa)) enclose the VWFD 3 domain. 4 disulfides stabilise this stretch: Cys895-Cys1026, Cys917-Cys1061, Cys926-Cys1023, and Cys944-Cys951. A glycan (N-linked (GlcNAc...) asparagine) is linked at Asn929. 2 N-linked (GlcNAc...) asparagine glycosylation sites follow: Asn1276 and Asn1292. One copy of the Cys-rich subdomain 1 repeat lies at 1333–1432 (CVREVCRWSS…RVLCCEYVPC (100 aa)). The interval 1333 to 4228 (CVREVCRWSS…RVFCCNYGHC (2896 aa)) is 7 X Cys-rich subdomain repeats. C-linked (Man) tryptophan glycosylation occurs at Trp1340. Disordered regions lie at residues 1437–1462 (APGT…QTTA) and 1480–1502 (LTSQ…GTTT). Residues 1450 to 1462 (TEPAVPTPTQTTA) show a composition bias toward low complexity. The Cys-rich subdomain 2 repeat unit spans residues 1503-1604 (CQPRCQWTEW…VLCCSDDHCR (102 aa)). C-linked (Man) tryptophan glycosylation occurs at Trp1509. The N-linked (GlcNAc...) asparagine glycan is linked to Asn1556. The interval 1607 to 1783 (ATTPPPTTEL…NTTTSQGTTR (177 aa)) is disordered. Low complexity predominate over residues 1614-1624 (TELETATTTTT). Composition is skewed to polar residues over residues 1625-1638 (QALF…SSPG) and 1645-1662 (ASTT…SPRY). A compositionally biased stretch (low complexity) spans 1663–1684 (TSTLGTATTGGPTTPAGSTEPT). Over residues 1689 to 1706 (ATSTLPTRSALPGTTGSL) the composition is skewed to polar residues. Composition is skewed to low complexity over residues 1739 to 1756 (EPLT…LSTS) and 1765 to 1777 (TETT…NTTT). The N-linked (GlcNAc...) asparagine glycan is linked to Asn1774. The Cys-rich subdomain 3 repeat unit spans residues 1784–1885 (CQPKCEWTEW…VLCCDDYSHC (102 aa)). A glycan (C-linked (Man) tryptophan) is linked at Trp1790. Residues 1890–1987 (ATSSTATPSS…TSVTPIPSSS (98 aa)) are compositionally biased toward low complexity. Disordered regions lie at residues 1890–2019 (ATSS…TAHT), 2031–2100 (GATG…GTTH), 2114–2211 (TGSM…HTVR), and 2242–2302 (TGTT…SSPT). Residues 1890 to 2199 (ATSSTATPSS…VPNTMATTHG (310 aa)) form an 11 X approximate tandem repeats, Ser/Thr-rich region. The segment covering 1988–1997 (LGTTWTRLSQ) has biased composition (polar residues). The span at 1998–2019 (TTTPTATMSTATPSSTPETAHT) shows a compositional bias: low complexity. Residues 2114 to 2181 (TGSMATPSSS…TSNTVTPSSA (68 aa)) are compositionally biased toward low complexity. Positions 2182–2199 (LGTTHTPPVPNTMATTHG) are enriched in polar residues. One copy of the Cys-rich subdomain 4 repeat lies at 2313–2414 (GCEPQCAWSE…RVFCCNYGHC (102 aa)). Trp2320 carries a C-linked (Man) tryptophan glycan. Positions 2419–2756 (ATSSTAMPSS…VPNTTATTHG (338 aa)) are 11 X approximate tandem repeats, Ser/Thr-rich. Disordered stretches follow at residues 2443 to 2462 (ATTT…PGTT), 2473 to 2522 (TVTV…ATAL), and 2556 to 2861 (TTPT…PTSA). Positions 2556 to 2738 (TTPTATMSTA…TSSTVTPSSA (183 aa)) are enriched in low complexity. The segment covering 2739-2786 (LGTTHTPPVPNTTATTHGRSLSPSSPHTVRTAWTSATSGTLGTTHITE) has biased composition (polar residues). Residue Asn2749 is glycosylated (N-linked (GlcNAc...) asparagine). Residues 2787-2861 (PSTGTSHTPA…TLLPSSPTSA (75 aa)) show a composition bias toward low complexity. An HAT 1 repeat occupies 2854 to 2886 (LPSSPTSAPITTVVTMGCEPQCAWSEWLDYSYP). The Cys-rich subdomain 5 repeat unit spans residues 2871 to 2971 (CEPQCAWSEW…RVFCCNYGHC (101 aa)). C-linked (Man) tryptophan glycosylation is present at Trp2877. The tract at residues 2976–3456 (ATSSTATPSS…VPNTTATTHG (481 aa)) is 17 X approximate tandem repeats, Ser/Thr-rich. Low complexity-rich tracts occupy residues 3001-3017 (TTTA…STPG) and 3026-3049 (TSTA…RTAT). Disordered regions lie at residues 3001 to 3049 (TTTA…RTAT), 3256 to 3357 (TTPT…GTTH), 3371 to 3469 (TGSM…TVRT), and 3481 to 3561 (TTHI…PTSA). Positions 3371–3438 (TGSMATPSSS…TSSTVTPSSA (68 aa)) are enriched in low complexity. Residues 3439 to 3456 (LGTTHTPPVPNTTATTHG) show a composition bias toward polar residues. An N-linked (GlcNAc...) asparagine glycan is attached at Asn3449. Positions 3487–3561 (PSTVTSHTPA…TLLPSSPTSA (75 aa)) are enriched in low complexity. An HAT 2 repeat occupies 3554 to 3586 (LPSSPTSAPITTVVTTGCEPQCAWSEWLDYSYP). One copy of the Cys-rich subdomain 6 repeat lies at 3571–3671 (CEPQCAWSEW…RVFCCNYGHC (101 aa)). A C-linked (Man) tryptophan glycan is attached at Trp3577. An 11 X approximate tandem repeats, Ser/Thr-rich region spans residues 3676 to 4013 (ATSSTATPSS…VPNTTATTHG (338 aa)). Disordered regions lie at residues 3699 to 3779 (TATT…ATAL), 3813 to 3917 (TTPT…HTPT), and 3956 to 4118 (ATGS…PTSA). Over residues 3956-3995 (ATGSTTNPSSTPGTTPIPPVLTTTATTPAATSSTVTPSSA) the composition is skewed to low complexity. Polar residues predominate over residues 3996–4043 (LGTTHTPPVPNTTATTHGRSLSPSSPHTVRTAWTSATSGTLGTTHITE). The N-linked (GlcNAc...) asparagine glycan is linked to Asn4006. Residues 4044-4118 (PSTGTSHTPA…TLLPSSPTSA (75 aa)) show a composition bias toward low complexity. The HAT 3 repeat unit spans residues 4111-4143 (LPSSPTSAPITTVVTTGCEPQCAWSEWLDYSYP). One copy of the Cys-rich subdomain 7 repeat lies at 4128–4228 (CEPQCAWSEW…RVFCCNYGHC (101 aa)). A C-linked (Man) tryptophan glycan is attached at Trp4134. The 23 X approximate tandem repeats, Ser/Thr-rich stretch occupies residues 4233–4879 (ATSSTAMPSS…TLGTAHTPKV (647 aa)). Composition is skewed to low complexity over residues 4259 to 4274 (TTAS…STPG) and 4283 to 4389 (TSPA…PGTT). 4 disordered regions span residues 4259-4389 (TTAS…PGTT), 4428-4447 (ATTT…PGTT), 4458-4527 (TVTV…AIPS), and 4541-4750 (TTPT…ATSF). N-linked (GlcNAc...) asparagine glycosylation is found at Asn4804, Asn4960, Asn5017, Asn5024, Asn5046, Asn5096, and Asn5111. The 189-residue stretch at 5073–5261 (CICSMWGGSH…VPDSRKDGCW (189 aa)) folds into the VWFD 4 domain. Cystine bridges form between Cys5075–Cys5221, Cys5097–Cys5260, and Cys5121–Cys5132. N-linked (GlcNAc...) asparagine glycosylation occurs at Asn5215. Residues 5412–5484 (CPCVGPDGFP…NPCCPETVCV (73 aa)) enclose the VWFC 2 domain. Residues Asn5486, Asn5526, Asn5565, Asn5566, Asn5602, Asn5612, Asn5663, Asn5677, and Asn5721 are each glycosylated (N-linked (GlcNAc...) asparagine). A VWFC 3 domain is found at 5521–5587 (QLCSYNGTFY…VAGQCCGECV (67 aa)). Intrachain disulfides connect Cys5653–Cys5705, Cys5672–Cys5719, Cys5681–Cys5735, and Cys5685–Cys5737. One can recognise a CTCK domain in the interval 5653-5742 (CEEDSCQVRI…DECGCTPFCV (90 aa)).

As to quaternary structure, homomultimer; disulfide-linked. The N- and C-terminus mediate their assembly into higher order structures to form filaments. The CTCK domains of two polypeptides associate in the endoplasmic reticulum to generate intermolecularly disulfide-bonded dimers. These dimers progress to the Golgi apparatus, which is a more acidic environment than the endoplasmic reticulum. Under acidic conditions, the N-termini form non-covalent intermolecular interactions that juxtapose assemblies from different CTCK-linked dimers to produce long, disulfide-linked polymers that remain highly compact until secretion. Post-translationally, highly glycosylated. C-, N- and O-glycosylated. C-mannosylated in the Cys-rich subdomains probably on the first Trp residue of the WXXW motif. Highly O-glycosylated in the Ser/Thr-rich tandem repeat (TR) region. The repeat region is about 59% O-glycosylated with a high abundance of NeuAc(2)Hex(1)HexNac1-ol. As to expression, expressed on surface airway epithelia. Expressed mainly in mucous cells of submucosal glands of airway tissues. Highly expressed in the sublingual gland. Also found in submaxillary glands, endocervix, gall bladder, and pancreas.

The protein resides in the secreted. Its function is as follows. Gel-forming mucin that is thought to contribute to the lubricating and viscoelastic properties of whole saliva and cervical mucus. This is Mucin-5B (MUC5B) from Homo sapiens (Human).